We begin with the raw amino-acid sequence, 308 residues long: Aspartate carbamoyltransferase catalytic subunit (308 aa).

2 residues coordinate carbamoyl phosphate: Arg-49 and Thr-50. Lys-77 is a binding site for L-aspartate. Residues Arg-99, His-127, and Gln-130 each contribute to the carbamoyl phosphate site. L-aspartate contacts are provided by Arg-160 and Arg-211. Residues Ala-252 and Pro-253 each contribute to the carbamoyl phosphate site.

The protein belongs to the aspartate/ornithine carbamoyltransferase superfamily. ATCase family. Heterododecamer (2C3:3R2) of six catalytic PyrB chains organized as two trimers (C3), and six regulatory PyrI chains organized as three dimers (R2).

It carries out the reaction carbamoyl phosphate + L-aspartate = N-carbamoyl-L-aspartate + phosphate + H(+). The protein operates within pyrimidine metabolism; UMP biosynthesis via de novo pathway; (S)-dihydroorotate from bicarbonate: step 2/3. Functionally, catalyzes the condensation of carbamoyl phosphate and aspartate to form carbamoyl aspartate and inorganic phosphate, the committed step in the de novo pyrimidine nucleotide biosynthesis pathway. The protein is Aspartate carbamoyltransferase catalytic subunit of Geobacillus thermodenitrificans (strain NG80-2).